We begin with the raw amino-acid sequence, 463 residues long: Glutamate--tRNA ligase 2 (463 aa).

The 'HIGH' region motif lies at 10–20; sequence PSPTGFLHIGS. The 'KMSKS' region motif lies at 239–243; the sequence is KLSKR. Residue K242 participates in ATP binding.

This sequence belongs to the class-I aminoacyl-tRNA synthetase family. Glutamate--tRNA ligase type 1 subfamily. Monomer.

The protein resides in the cytoplasm. The enzyme catalyses tRNA(Glu) + L-glutamate + ATP = L-glutamyl-tRNA(Glu) + AMP + diphosphate. In terms of biological role, catalyzes the attachment of glutamate to tRNA(Glu) in a two-step reaction: glutamate is first activated by ATP to form Glu-AMP and then transferred to the acceptor end of tRNA(Glu). This Rickettsia felis (strain ATCC VR-1525 / URRWXCal2) (Rickettsia azadi) protein is Glutamate--tRNA ligase 2.